A 412-amino-acid polypeptide reads, in one-letter code: Argininosuccinate synthase (412 aa).

ATP contacts are provided by residues 10–18 and A36; that span reads AYSGGLDTS. 2 residues coordinate L-citrulline: Y87 and S92. Residue Y87 is modified to Phosphotyrosine. K112 is subject to N6-acetyllysine. Y113 is subject to Phosphotyrosine. 115 to 123 serves as a coordination point for ATP; sequence SHGATGKGN. T119, N123, and D124 together coordinate L-aspartate. Position 123 (N123) interacts with L-citrulline. R127 serves as a coordination point for L-citrulline. K165 and K176 each carry N6-acetyllysine; by CLOCK. S177 and S180 each carry phosphoserine. L-citrulline is bound by residues S180 and S189. S219 carries the phosphoserine modification. Residues E270 and Y282 each contribute to the L-citrulline site.

Belongs to the argininosuccinate synthase family. Type 1 subfamily. Homotetramer. Interacts with NMRAL1. Interacts with CLOCK; in a circadian manner. Forms tissue-specific complexes with ASL, SLC7A1, HSP90AA1 and nitric oxide synthase NOS1, NOS2 or NOS3; the complex regulates cell-autonomous L-arginine synthesis and citrulline recycling while channeling extracellular L-arginine to nitric oxide synthesis pathway. Post-translationally, acetylated by CLOCK in a circadian manner which negatively regulates its enzyme activity. Deacetylated by histone deacetylases. In terms of tissue distribution, widely expressed.

It is found in the cytoplasm. The protein localises to the cytosol. It catalyses the reaction L-citrulline + L-aspartate + ATP = 2-(N(omega)-L-arginino)succinate + AMP + diphosphate + H(+). The protein operates within amino-acid biosynthesis; L-arginine biosynthesis; L-arginine from L-ornithine and carbamoyl phosphate: step 2/3. Its pathway is nitrogen metabolism; urea cycle; (N(omega)-L-arginino)succinate from L-aspartate and L-citrulline: step 1/1. Its function is as follows. One of the enzymes of the urea cycle, the metabolic pathway transforming neurotoxic amonia produced by protein catabolism into inocuous urea in the liver of ureotelic animals. Catalyzes the formation of arginosuccinate from aspartate, citrulline and ATP and together with ASL it is responsible for the biosynthesis of arginine in most body tissues. In Mus musculus (Mouse), this protein is Argininosuccinate synthase.